The chain runs to 148 residues: MPSRYPGAVTQDWEPVVLHKSKQKSQDLRDPKAVNAALRNGVAVQTVKKFDAGSNKKGKSTAVPVINTKKLEEETEPAAMDRVKAEVRLMIQKARLEKKMSQADLAKQINERTQVVQEYENGKAVPNQAVLAKMEKVLGVKLRGKIGK.

The HTH cro/C1-type domain maps to 91 to 145 (IQKARLEKKMSQADLAKQINERTQVVQEYENGKAVPNQAVLAKMEKVLGVKLRGK). Positions 102–121 (QADLAKQINERTQVVQEYEN) form a DNA-binding region, H-T-H motif.

The protein belongs to the MBF1 family. As to quaternary structure, binds to TPS5. As to expression, expressed in leaves, roots, stems, flowers, siliques and shoots. Not detected in seeds.

The protein localises to the nucleus. It is found in the nucleolus. Its subcellular location is the cytoplasm. In terms of biological role, transcriptional coactivator that stimulates transcriptional activity by bridging regulatory proteins and TBP, thereby recruiting TBP to promoters occupied by DNA-binding regulators. Involved in the tolerance to heat and osmotic stress by partially activating the ethylene-response signal transduction pathway. The chain is Multiprotein-bridging factor 1c (MBF1C) from Arabidopsis thaliana (Mouse-ear cress).